We begin with the raw amino-acid sequence, 639 residues long: Testicular spindle-associated protein SHCBP1L (639 aa).

Disordered regions lie at residues 1–25 and 48–75; these read MESDATTSEPKASVGSDSSPAEQTV and VASPRPVKGKAARRRLQLPPVTQAETCD. Ser3 carries the post-translational modification O-acetylserine. Residues Ser8, Ser19, and Ser50 each carry the phosphoserine modification. The span at 54 to 63 shows a compositional bias: basic residues; that stretch reads VKGKAARRRL. A coiled-coil region spans residues 285 to 312; the sequence is IAQRFKKTLEKYKNKRVELIEYQSNIKE. PbH1 repeat units lie at residues 479-500, 501-523, 524-557, and 560-582; these read SGHLTLENCLLKCEGTGVCVLT, GASLTITNSEITGAQGAGVELYP, GSIAILEGNEIHHCNNLRTSDSSKSTLGGVNMKV, and APKLKMTNNHIYNNNGYGVSILQ. An N6-acetyllysine modification is found at Lys556. An N6-acetyllysine modification is found at Lys631.

In terms of assembly, interacts with HSPA2; this interaction may promote the recruitment of HSPA2 to the spindle. In terms of tissue distribution, expressed in pachytene spermatocytes and elongating spermatids inside the seminiferous tubules. Not detected in ovary (at protein level). Testis-specific.

It localises to the cytoplasm. It is found in the cytoskeleton. The protein localises to the spindle. Testis-specific spindle-associated factor that plays a role in spermatogenesis. In association with HSPA2, participates in the maintenance of spindle integrity during meiosis in male germ cells. The sequence is that of Testicular spindle-associated protein SHCBP1L from Mus musculus (Mouse).